The following is a 159-amino-acid chain: Ribosomal RNA large subunit methyltransferase H (159 aa).

S-adenosyl-L-methionine is bound by residues leucine 76, glycine 108, and phenylalanine 127–leucine 132.

Belongs to the RNA methyltransferase RlmH family. In terms of assembly, homodimer.

It localises to the cytoplasm. It carries out the reaction pseudouridine(1915) in 23S rRNA + S-adenosyl-L-methionine = N(3)-methylpseudouridine(1915) in 23S rRNA + S-adenosyl-L-homocysteine + H(+). Functionally, specifically methylates the pseudouridine at position 1915 (m3Psi1915) in 23S rRNA. In Streptococcus pneumoniae (strain 70585), this protein is Ribosomal RNA large subunit methyltransferase H.